Reading from the N-terminus, the 372-residue chain is N-methyl-L-tryptophan oxidase (372 aa).

FAD is bound at residue Asp-4–His-34. Position 308 is an S-8alpha-FAD cysteine (Cys-308).

It belongs to the MSOX/MTOX family. MTOX subfamily. Monomer. The cofactor is FAD.

It carries out the reaction N(alpha)-methyl-L-tryptophan + O2 + H2O = L-tryptophan + formaldehyde + H2O2. Catalyzes the oxidative demethylation of N-methyl-L-tryptophan. The sequence is that of N-methyl-L-tryptophan oxidase from Escherichia coli O7:K1 (strain IAI39 / ExPEC).